The following is a 431-amino-acid chain: Tol-Pal system protein TolB (431 aa).

Positions Met-1–Ala-26 are cleaved as a signal peptide. Positions Pro-411–Gln-431 are disordered.

The protein belongs to the TolB family. In terms of assembly, the Tol-Pal system is composed of five core proteins: the inner membrane proteins TolA, TolQ and TolR, the periplasmic protein TolB and the outer membrane protein Pal. They form a network linking the inner and outer membranes and the peptidoglycan layer.

It localises to the periplasm. In terms of biological role, part of the Tol-Pal system, which plays a role in outer membrane invagination during cell division and is important for maintaining outer membrane integrity. The chain is Tol-Pal system protein TolB from Burkholderia lata (strain ATCC 17760 / DSM 23089 / LMG 22485 / NCIMB 9086 / R18194 / 383).